Here is a 429-residue protein sequence, read N- to C-terminus: UPF0053 protein YugS (429 aa).

Transmembrane regions (helical) follow at residues 1–21, 61–81, 101–121, and 133–153; these read MLIL…VFVA, ACQL…EPTF, IVTF…MGEL, and AVSL…YPFI. In terms of domain architecture, CNNM transmembrane spans 1–201; the sequence is MLILQLIAIF…YEKGEINQSE (201 aa). 2 CBS domains span residues 220 to 281 and 284 to 341; these read MIPR…PIKL and IMRP…IRDE.

Belongs to the UPF0053 family.

It localises to the cell membrane. The sequence is that of UPF0053 protein YugS (yugS) from Bacillus subtilis (strain 168).